A 125-amino-acid polypeptide reads, in one-letter code: Mitochondrial import inner membrane translocase subunit TIM16 (125 aa).

The J-like stretch occupies residues glutamate 58–arginine 110. Serine 69 carries the phosphoserine modification.

Belongs to the TIM16/PAM16 family. In terms of assembly, probable component of the PAM complex at least composed of a mitochondrial HSP70 protein, GRPEL1 or GRPEL2, TIMM44, TIMM16/PAM16 and TIMM14/DNAJC19. Interacts with DNAJC19. Directly interacts with DNAJC15; this interaction counteracts DNAJC15-dependent stimulation of HSPA9 ATPase activity. Associates with the TIM23 complex. In terms of tissue distribution, expressed in trabecular bone and cartilage and by differentiated chondrocytes localized in the hypertrophic zone and by osteoblasts at early developmental stages.

The protein resides in the mitochondrion inner membrane. Functionally, regulates ATP-dependent protein translocation into the mitochondrial matrix. Inhibits DNAJC19 stimulation of HSPA9/Mortalin ATPase activity. This is Mitochondrial import inner membrane translocase subunit TIM16 from Mus musculus (Mouse).